Reading from the N-terminus, the 177-residue chain is MTKTTKSANTKTPDEVKTDGLKEKMVSVNRVTKVVKGGRILGFAALTVVGDGKGSVGMGKGKSREVPLAVQKAMDEARQRMVRVNLINGTLHHSVIGRHGAARVYMQPASEGTGIIAGGPMRAIFEVMGVHNILAKCLGSTNPYNIVRATLDGLSKVQTPAMIAAKRGKSIDEITGA.

The 64-residue stretch at 21–84 folds into the S5 DRBM domain; sequence LKEKMVSVNR…DEARQRMVRV (64 aa).

The protein belongs to the universal ribosomal protein uS5 family. As to quaternary structure, part of the 30S ribosomal subunit. Contacts proteins S4 and S8.

With S4 and S12 plays an important role in translational accuracy. Functionally, located at the back of the 30S subunit body where it stabilizes the conformation of the head with respect to the body. This is Small ribosomal subunit protein uS5 from Nitrosomonas europaea (strain ATCC 19718 / CIP 103999 / KCTC 2705 / NBRC 14298).